Consider the following 422-residue polypeptide: Protein phosphatase methylesterase 1 (422 aa).

The interval 1–27 (MSDMFRKSVLNKLPHLPPTRAPWADES) is disordered. Residues serine 207, aspartate 234, and histidine 371 contribute to the active site.

Belongs to the AB hydrolase superfamily.

The enzyme catalyses [phosphatase 2A protein]-C-terminal L-leucine methyl ester + H2O = [phosphatase 2A protein]-C-terminal L-leucine + methanol + H(+). Demethylates proteins that have been reversibly carboxymethylated. Demethylates the phosphatase PP2A catalytic subunit. This chain is Protein phosphatase methylesterase 1 (PPE1), found in Cryptococcus neoformans var. neoformans serotype D (strain B-3501A) (Filobasidiella neoformans).